The sequence spans 325 residues: Metacaspase-9 (325 aa).

Active-site residues include H95 and C147. C147 bears the S-nitrosocysteine mark. A glycan (N-linked (GlcNAc...) asparagine) is linked at N177.

Belongs to the peptidase C14B family. The two subunits are derived from the precursor sequence by an autocatalytic mechanism. Post-translationally, S-nitrosylation at Cys-147 suppresses both autoprocessing and proteolytic activity of the full-length protein, but does not affect the activity of the mature processed form. In terms of tissue distribution, expressed in root tips, cauline leaves, flowers and siliques.

Its subcellular location is the secreted. It is found in the extracellular space. It localises to the apoplast. Inhibited by serpin ZX and nitric oxide through cysteine nitrosylation. Its function is as follows. Cysteine protease that cleaves specifically after arginine or lysine residues. Does not cleave caspase-specific substrates. Required for proteolytic processing of GRI. In Arabidopsis thaliana (Mouse-ear cress), this protein is Metacaspase-9 (AMC9).